Here is an 86-residue protein sequence, read N- to C-terminus: Protein Tat (86 aa).

An interaction with human CREBBP region spans residues 1–24 (MEPVDPRLEPWKHPGSQPKTACTN). Positions 1-48 (MEPVDPRLEPWKHPGSQPKTACTNCYCKKCCFHCQVCFITKALGISYG) are transactivation. Positions 22, 25, and 27 each coordinate Zn(2+). A cysteine-rich region spans residues 22–37 (CTNCYCKKCCFHCQVC). K28 bears the N6-acetyllysine; by host PCAF mark. Zn(2+) is bound by residues C30, H33, C34, and C37. The core stretch occupies residues 38–48 (FITKALGISYG). Over residues 48–59 (GRKKRRQRRRAH) the composition is skewed to basic residues. The disordered stretch occupies residues 48-86 (GRKKRRQRRRAHQNSQTHQASLSKQPTSQPRGDPTGPKE). A Nuclear localization signal, RNA-binding (TAR), and protein transduction motif is present at residues 49 to 57 (RKKRRQRRR). Positions 49–86 (RKKRRQRRRAHQNSQTHQASLSKQPTSQPRGDPTGPKE) are interaction with the host capping enzyme RNGTT. K50 and K51 each carry N6-acetyllysine; by host EP300 and GCN5L2. Asymmetric dimethylarginine; by host PRMT6 is present on residues R52 and R53. The segment covering 60–77 (QNSQTHQASLSKQPTSQP) has biased composition (polar residues). Residue K71 forms a Glycyl lysine isopeptide (Lys-Gly) (interchain with G-Cter in ubiquitin) linkage. The Cell attachment site signature appears at 78-80 (RGD).

Belongs to the lentiviruses Tat family. Interacts with host CCNT1. Associates with the P-TEFb complex composed at least of Tat, P-TEFb (CDK9 and CCNT1), TAR RNA, RNA Pol II. Recruits the HATs CREBBP, TAF1/TFIID, EP300, PCAF and GCN5L2. Interacts with host KAT5/Tip60; this interaction targets the latter to degradation. Interacts with the host deacetylase SIRT1. Interacts with host capping enzyme RNGTT; this interaction stimulates RNGTT. Binds to host KDR, and to the host integrins ITGAV/ITGB3 and ITGA5/ITGB1. Interacts with host KPNB1/importin beta-1 without previous binding to KPNA1/importin alpha-1. Interacts with EIF2AK2. Interacts with host nucleosome assembly protein NAP1L1; this interaction may be required for the transport of Tat within the nucleus, since the two proteins interact at the nuclear rim. Interacts with host C1QBP/SF2P32; this interaction involves lysine-acetylated Tat. Interacts with the host chemokine receptors CCR2, CCR3 and CXCR4. Interacts with host DPP4/CD26; this interaction may trigger an anti-proliferative effect. Interacts with host LDLR. Interacts with the host extracellular matrix metalloproteinase MMP1. Interacts with host PRMT6; this interaction mediates Tat's methylation. Interacts with, and is ubiquitinated by MDM2/Hdm2. Interacts with host PSMC3 and HTATIP2. Interacts with STAB1; this interaction may overcome SATB1-mediated repression of IL2 and IL2RA (interleukin) in T cells by binding to the same domain than HDAC1. Interacts (when acetylated) with human CDK13, thereby increasing HIV-1 mRNA splicing and promoting the production of the doubly spliced HIV-1 protein Nef. Interacts with host TBP; this interaction modulates the activity of transcriptional pre-initiation complex. Interacts with host RELA. Interacts with host PLSCR1; this interaction negatively regulates Tat transactivation activity by altering its subcellular distribution. In terms of processing, asymmetrical arginine methylation by host PRMT6 seems to diminish the transactivation capacity of Tat and affects the interaction with host CCNT1. Acetylation by EP300, CREBBP, GCN5L2/GCN5 and PCAF regulates the transactivation activity of Tat. EP300-mediated acetylation of Lys-50 promotes dissociation of Tat from the TAR RNA through the competitive binding to PCAF's bromodomain. In addition, the non-acetylated Tat's N-terminus can also interact with PCAF. PCAF-mediated acetylation of Lys-28 enhances Tat's binding to CCNT1. Lys-50 is deacetylated by SIRT1. Post-translationally, polyubiquitination by host MDM2 does not target Tat to degradation, but activates its transactivation function and fosters interaction with CCNT1 and TAR RNA. In terms of processing, phosphorylated by EIF2AK2 on serine and threonine residues adjacent to the basic region important for TAR RNA binding and function. Phosphorylation of Tat by EIF2AK2 is dependent on the prior activation of EIF2AK2 by dsRNA.

It localises to the host nucleus. Its subcellular location is the host nucleolus. It is found in the host cytoplasm. The protein resides in the secreted. Transcriptional activator that increases RNA Pol II processivity, thereby increasing the level of full-length viral transcripts. Recognizes a hairpin structure at the 5'-LTR of the nascent viral mRNAs referred to as the transactivation responsive RNA element (TAR) and recruits the cyclin T1-CDK9 complex (P-TEFb complex) that will in turn hyperphosphorylate the RNA polymerase II to allow efficient elongation. The CDK9 component of P-TEFb and other Tat-activated kinases hyperphosphorylate the C-terminus of RNA Pol II that becomes stabilized and much more processive. Other factors such as HTATSF1/Tat-SF1, SUPT5H/SPT5, and HTATIP2 are also important for Tat's function. Besides its effect on RNA Pol II processivity, Tat induces chromatin remodeling of proviral genes by recruiting the histone acetyltransferases (HATs) CREBBP, EP300 and PCAF to the chromatin. This also contributes to the increase in proviral transcription rate, especially when the provirus integrates in transcriptionally silent region of the host genome. To ensure maximal activation of the LTR, Tat mediates nuclear translocation of NF-kappa-B by interacting with host RELA. Through its interaction with host TBP, Tat may also modulate transcription initiation. Tat can reactivate a latently infected cell by penetrating in it and transactivating its LTR promoter. In the cytoplasm, Tat is thought to act as a translational activator of HIV-1 mRNAs. Functionally, extracellular circulating Tat can be endocytosed by surrounding uninfected cells via the binding to several surface receptors such as CD26, CXCR4, heparan sulfate proteoglycans (HSPG) or LDLR. Neurons are rarely infected, but they internalize Tat via their LDLR. Through its interaction with nuclear HATs, Tat is potentially able to control the acetylation-dependent cellular gene expression. Modulates the expression of many cellular genes involved in cell survival, proliferation or in coding for cytokines or cytokine receptors. Tat plays a role in T-cell and neurons apoptosis. Tat induced neurotoxicity and apoptosis probably contribute to neuroAIDS. Circulating Tat also acts as a chemokine-like and/or growth factor-like molecule that binds to specific receptors on the surface of the cells, affecting many cellular pathways. In the vascular system, Tat binds to ITGAV/ITGB3 and ITGA5/ITGB1 integrins dimers at the surface of endothelial cells and competes with bFGF for heparin-binding sites, leading to an excess of soluble bFGF. The sequence is that of Protein Tat from Homo sapiens (Human).